Consider the following 236-residue polypeptide: tRNA1(Val) (adenine(37)-N6)-methyltransferase (236 aa).

Belongs to the methyltransferase superfamily. tRNA (adenine-N(6)-)-methyltransferase family.

The protein localises to the cytoplasm. It carries out the reaction adenosine(37) in tRNA1(Val) + S-adenosyl-L-methionine = N(6)-methyladenosine(37) in tRNA1(Val) + S-adenosyl-L-homocysteine + H(+). Its function is as follows. Specifically methylates the adenine in position 37 of tRNA(1)(Val) (anticodon cmo5UAC). The protein is tRNA1(Val) (adenine(37)-N6)-methyltransferase of Shewanella sp. (strain MR-7).